Consider the following 556-residue polypeptide: Formate--tetrahydrofolate ligase (556 aa).

Position 65–72 (65–72 (TPAGEGKT)) interacts with ATP.

Belongs to the formate--tetrahydrofolate ligase family.

The catalysed reaction is (6S)-5,6,7,8-tetrahydrofolate + formate + ATP = (6R)-10-formyltetrahydrofolate + ADP + phosphate. The protein operates within one-carbon metabolism; tetrahydrofolate interconversion. This is Formate--tetrahydrofolate ligase from Maricaulis maris (strain MCS10) (Caulobacter maris).